The sequence spans 559 residues: Terpene synthase 1 (559 aa).

Residues aspartate 312, aspartate 316, aspartate 456, and glutamate 464 each contribute to the Mg(2+) site. The DDXXD motif motif lies at 312–316 (DDLYD).

It belongs to the terpene synthase family. Tpsa subfamily. Requires Mg(2+) as cofactor. It depends on Mn(2+) as a cofactor. In terms of tissue distribution, mostly expressed in stems and, to a lower extent, in leaves, roots and fruits.

The catalysed reaction is (2E,6E)-farnesyl diphosphate = (-)-(E)-beta-caryophyllene + diphosphate. The enzyme catalyses (2E,6E)-farnesyl diphosphate = alpha-humulene + diphosphate. Its pathway is secondary metabolite biosynthesis; terpenoid biosynthesis. Functionally, sesquiterpene synthase involved in the biosynthesis of volatile compounds that contribute to the characteristic flavors of black pepper. Mediates the conversion of (2E,6E)-farnesyl diphosphate (FPP) into beta-caryophyllene and, as a minor compound, into alpha-humulene. The chain is Terpene synthase 1 from Piper nigrum (Black pepper).